A 139-amino-acid polypeptide reads, in one-letter code: Exodeoxyribonuclease 7 small subunit (139 aa).

2 disordered regions span residues 1–26 (MAKK…LGDF) and 82–139 (DAEG…EDDE). Acidic residues predominate over residues 130 to 139 (ADLDSAEDDE).

It belongs to the XseB family. As to quaternary structure, heterooligomer composed of large and small subunits.

It localises to the cytoplasm. It catalyses the reaction Exonucleolytic cleavage in either 5'- to 3'- or 3'- to 5'-direction to yield nucleoside 5'-phosphates.. Bidirectionally degrades single-stranded DNA into large acid-insoluble oligonucleotides, which are then degraded further into small acid-soluble oligonucleotides. The sequence is that of Exodeoxyribonuclease 7 small subunit from Rhodopirellula baltica (strain DSM 10527 / NCIMB 13988 / SH1).